Reading from the N-terminus, the 516-residue chain is Facilitated glucose transporter homolog (516 aa).

The tract at residues 1 to 37 is disordered; the sequence is MNAVVASQNKNDRSFSNMESESSSNVEKSEKENHHQS. Topologically, residues 1–47 are cytoplasmic; sequence MNAVVASQNKNDRSFSNMESESSSNVEKSEKENHHQSLPDENWTPFL. The span at 14 to 26 shows a compositional bias: low complexity; that stretch reads SFSNMESESSSNV. Over residues 27-37 the composition is skewed to basic and acidic residues; that stretch reads EKSEKENHHQS. The chain crosses the membrane as a helical span at residues 48–68; it reads FFCISSIALASFQDGFQIGCI. Over 69–101 the chain is Extracellular; that stretch reads NAPGPLIIDWIKKCHFELFGEVLSQYQADFIWS. Residues 102–122 traverse the membrane as a helical segment; sequence VAVSMFSVGGMFGSFCSGFLA. At 123–138 the chain is on the cytoplasmic side; it reads DKFGRKSTLLYNNILA. Residues 139 to 159 form a helical membrane-spanning segment; the sequence is LLAAVCLSTSKLFNFYPMIVF. The Extracellular portion of the chain corresponds to 160-161; that stretch reads GR. Residues 162 to 182 form a helical membrane-spanning segment; sequence FLVGLNCGITSGLVPMFLTEL. The Cytoplasmic portion of the chain corresponds to 183–200; sequence APANLRGKCGSFHQLNIS. A helical membrane pass occupies residues 201-221; the sequence is VAIVLSQALGLPQIFGTQVGW. Residue proline 222 is a topological domain, extracellular. A helical transmembrane segment spans residues 223 to 243; sequence YIFACVAIPTFLQLATIPFCV. The Cytoplasmic portion of the chain corresponds to 244-306; it reads ESPKYLISKL…SLFKGDNQWP (63 aa). Residues 307 to 327 form a helical membrane-spanning segment; that stretch reads MIVSILMMFSQQFSGISAVTF. Topologically, residues 328-344 are extracellular; that stretch reads YSTLIFKRNGLSGNEPM. Residues 345 to 365 form a helical membrane-spanning segment; the sequence is YATVGFGCIKLIATFGCLFLI. At 366 to 376 the chain is on the cytoplasmic side; that stretch reads DHPKFGRKRLH. A helical transmembrane segment spans residues 377-397; the sequence is IAGLSGMCISSILIVITLTLS. The Extracellular portion of the chain corresponds to 398–409; it reads NAGYHWASYMNV. A helical membrane pass occupies residues 410 to 430; sequence LFILSFVVTFAFGPGPIPWFF. Residues 431-444 are Cytoplasmic-facing; the sequence is TSELFDSATRGRAA. A helical membrane pass occupies residues 445-465; that stretch reads AVSATSNWVANWMVGLTFLPI. The Extracellular portion of the chain corresponds to 466-471; that stretch reads NNIIHQ. Residues 472-492 form a helical membrane-spanning segment; it reads YAFLMFTFFTFTFAIFTWKFV. Topologically, residues 493 to 516 are cytoplasmic; that stretch reads PETKGKSPSAIRKELAFMRKRICS.

Belongs to the major facilitator superfamily. Sugar transporter (TC 2.A.1.1) family. Expressed in seam cells from the early embryonic stage through the L2 stage (at protein level).

The protein localises to the cell membrane. Functionally, appears to have no transport activity for glucose. The polypeptide is Facilitated glucose transporter homolog (Caenorhabditis elegans).